Consider the following 1268-residue polypeptide: Protein transport protein Sec24B (1268 aa).

Low complexity-rich tracts occupy residues 1–14 (MSAPAGSSHPAASA) and 21–48 (GGAAVSGAAAPAGPGAGPAPHQQNGPAQ). Disordered stretches follow at residues 1 to 71 (MSAP…SGHY), 216 to 263 (APTV…LTWS), 303 to 345 (QNVQ…SVTQ), and 362 to 451 (NNQA…VVPQ). Ser-2 carries the post-translational modification N-acetylserine. Ser-55 carries the post-translational modification Phosphoserine. Over residues 225-234 (NSFSGQNTAI) the composition is skewed to polar residues. Composition is skewed to low complexity over residues 245 to 255 (SQQHHQQQSLS), 311 to 332 (SPVVSTVLSGSSGSSSTRTPPT), and 365 to 375 (ASSAPTPLSST). Thr-329 carries the phosphothreonine modification. Positions 376 to 389 (SDDEEEEEEDEEAG) are enriched in acidic residues. Residues 426-450 (APDPAPEPDPASAPAPASAPAPVVP) are compositionally biased toward pro residues. 4 residues coordinate Zn(2+): Cys-605, Cys-608, Cys-626, and Cys-629. The tract at residues 605 to 629 (CRSCRTYINPFVSFIDQRRWKCNLC) is zinc finger-like. Residues 1141–1213 (PQPPLQKLSA…TLSSERARSF (73 aa)) form a Gelsolin-like repeat. Ser-1224 bears the Phosphoserine mark.

Belongs to the SEC23/SEC24 family. SEC24 subfamily. COPII is composed of at least five proteins: the Sec23/24 complex, the Sec13/31 complex and SAR1. Interacts with STING1; promoting STING1 translocation to COPII vesicles in a STEEP1-dependent manner. Interacts with RNF139. Interacts with TMED2 and TMED10. Interacts with CNIH4.

Its subcellular location is the cytoplasmic vesicle. It is found in the COPII-coated vesicle membrane. The protein resides in the endoplasmic reticulum membrane. The protein localises to the cytoplasm. It localises to the cytosol. Functionally, component of the coat protein complex II (COPII) which promotes the formation of transport vesicles from the endoplasmic reticulum (ER). The coat has two main functions, the physical deformation of the endoplasmic reticulum membrane into vesicles and the selection of cargo molecules for their transport to the Golgi complex. Plays a central role in cargo selection within the COPII complex and together with SEC24A may have a different specificity compared to SEC24C and SEC24D. May package preferentially cargos with cytoplasmic DxE or LxxLE motifs and may also recognize conformational epitopes. This chain is Protein transport protein Sec24B, found in Homo sapiens (Human).